We begin with the raw amino-acid sequence, 419 residues long: Protein phosphatase methylesterase 1 (419 aa).

Over residues 1-12 (MSQLHRGMHKKP) the composition is skewed to basic residues. The tract at residues 1–75 (MSQLHRGMHK…KSAASPTVPA (75 aa)) is disordered. Residues 32–52 (TETEETVECTEEEEEQDETDG) show a composition bias toward acidic residues. Catalysis depends on residues Ser230, Asp256, and His383.

This sequence belongs to the AB hydrolase superfamily.

It carries out the reaction [phosphatase 2A protein]-C-terminal L-leucine methyl ester + H2O = [phosphatase 2A protein]-C-terminal L-leucine + methanol + H(+). Demethylates proteins that have been reversibly carboxymethylated. Demethylates the phosphatase PP2A catalytic subunit. This is Protein phosphatase methylesterase 1 (PPE1) from Yarrowia lipolytica (strain CLIB 122 / E 150) (Yeast).